The chain runs to 150 residues: Putative solute carrier family 19 member 4 (150 aa).

Residues 118-137 form a disordered region; it reads PSVREGACNEKSTENKKPQD. Basic and acidic residues predominate over residues 124-136; the sequence is ACNEKSTENKKPQ.

It belongs to the reduced folate carrier (RFC) transporter (TC 2.A.48) family.

The protein is Putative solute carrier family 19 member 4 of Homo sapiens (Human).